The sequence spans 212 residues: Adenylate kinase (212 aa).

Residue 10–15 (GAGKGT) coordinates ATP. The tract at residues 30–59 (ALGDIFRTIIKTSTSEAELINNYVKQGELV) is NMP. AMP contacts are provided by residues Arg36, 57–59 (ELV), 85–88 (GYPR), and Gln92. The interval 122-160 (GRYSCKNCRKIYNSYFLQPKTDNVCDVCGSSTFDYRKDD) is LID. Arg123 provides a ligand contact to ATP. Zn(2+) is bound by residues Cys126 and Cys129. 132-133 (IY) lines the ATP pocket. Residues Cys146 and Cys149 each coordinate Zn(2+). AMP contacts are provided by Arg157 and Arg168. Position 196 (Lys196) interacts with ATP.

It belongs to the adenylate kinase family. In terms of assembly, monomer.

Its subcellular location is the cytoplasm. The catalysed reaction is AMP + ATP = 2 ADP. It participates in purine metabolism; AMP biosynthesis via salvage pathway; AMP from ADP: step 1/1. In terms of biological role, catalyzes the reversible transfer of the terminal phosphate group between ATP and AMP. Plays an important role in cellular energy homeostasis and in adenine nucleotide metabolism. In Rickettsia akari (strain Hartford), this protein is Adenylate kinase.